The following is a 558-amino-acid chain: INCREASED PETAL GROWTH ANISOTROPY 1-like protein 2 (558 aa).

Over residues 1–15 (MSRISTTSTTPSRVR) the composition is skewed to low complexity. The tract at residues 1–54 (MSRISTTSTTPSRVRAANSHYSVISKPRAQDDNGLTGGKPKSSGYDVKNDPAKR) is disordered. A coiled-coil region spans residues 104 to 180 (VMATAAAEDE…EAKISSLSSN (77 aa)). Positions 207-285 (KVKKEVAVES…AARAQKSPPV (79 aa)) are disordered. Pro residues-rich tracts occupy residues 221–236 (PPSP…PPLP) and 256–272 (FAPP…PPRP). The stretch at 392 to 448 (KADTLQEAAVEYRELKKLEKELSSYSDDPNIHYGVALKKMANLLDKSEQRIRRLVRL) forms a coiled coil.

Belongs to the IPGA1 family.

The protein resides in the cytoplasm. Its subcellular location is the cytoskeleton. Functionally, microtubule-associated protein probably involved in the regulation of microtubule organization. The chain is INCREASED PETAL GROWTH ANISOTROPY 1-like protein 2 from Arabidopsis thaliana (Mouse-ear cress).